Reading from the N-terminus, the 104-residue chain is UPF0125 protein PSPTO_4512 (104 aa).

It belongs to the UPF0125 (RnfH) family.

This chain is UPF0125 protein PSPTO_4512, found in Pseudomonas syringae pv. tomato (strain ATCC BAA-871 / DC3000).